The sequence spans 105 residues: MGCCGCGGCGGGCGGCGGGCSGGCGGGCGGGCGSCTTCRCYRVGCCSSCCPCCRGCCGGCCSTPVICCCRRTCHSCGCGCGCGKGCCQQKGCCQQKGCCKKQCCC.

A 13 X 2 AA repeats of CG region spans residues C4–G83.

Belongs to the KRTAP type 28 family.

Its function is as follows. In the hair cortex, hair keratin intermediate filaments are embedded in an interfilamentous matrix, consisting of hair keratin-associated proteins (KRTAP), which are essential for the formation of a rigid and resistant hair shaft through their extensive disulfide bond cross-linking with abundant cysteine residues of hair keratins. The matrix proteins include the high-sulfur and high-glycine-tyrosine keratins. The polypeptide is Small cysteine and glycine repeat-containing protein 6 (Homo sapiens (Human)).